We begin with the raw amino-acid sequence, 343 residues long: CMP-N-acetylneuraminate-beta-galactosamide-alpha-2,3-sialyltransferase 1 (343 aa).

The Cytoplasmic segment spans residues 1–11 (MAPMRKKSTLK). Residues 12-27 (LLTLLVLFIFLTSFFL) traverse the membrane as a helical; Signal-anchor for type II membrane protein segment. An N-linked (GlcNAc...) asparagine glycan is attached at asparagine 28. At 28-343 (NYSHTVVTTA…INKIRIFKGR (316 aa)) the chain is on the lumenal side. Intrachain disulfides connect cysteine 62-cysteine 67, cysteine 64-cysteine 142, and cysteine 145-cysteine 284. Asparagine 82 is a glycosylation site (N-linked (GlcNAc...) asparagine). Substrate is bound at residue glutamine 108. Asparagine 117 carries N-linked (GlcNAc...) asparagine glycosylation. Positions 150, 173, 233, 269, 273, 293, 302, and 319 each coordinate substrate. Asparagine 326 carries N-linked (GlcNAc...) asparagine glycosylation.

It belongs to the glycosyltransferase 29 family. The soluble form derives from the membrane form by proteolytic processing. The long isoform is abundant in salivary gland, liver, lung, and colon mucosa. Both long and short forms are detected in submaxillary salivary glands.

It localises to the golgi apparatus. The protein resides in the golgi stack membrane. The protein localises to the trans-Golgi network membrane. Its subcellular location is the secreted. It catalyses the reaction a beta-D-galactosyl-(1-&gt;3)-N-acetyl-alpha-D-galactosaminyl derivative + CMP-N-acetyl-beta-neuraminate = an N-acetyl-alpha-neuraminyl-(2-&gt;3)-beta-D-galactosyl-(1-&gt;3)-N-acetyl-alpha-D-galactosaminyl derivative + CMP + H(+). The catalysed reaction is a ganglioside GM1 (d18:1(4E)) + CMP-N-acetyl-beta-neuraminate = a ganglioside GD1a (d18:1(4E)) + CMP + H(+). The enzyme catalyses ganglioside GM1 (d18:1(4E)/18:0) + CMP-N-acetyl-beta-neuraminate = ganglioside GD1a (18:1(4E)/18:0) + CMP + H(+). It carries out the reaction a ganglioside GA1 (d18:1(4E)) + CMP-N-acetyl-beta-neuraminate = a ganglioside GM1b (d18:1(4E)) + CMP + H(+). It catalyses the reaction a ganglioside GD1b + CMP-N-acetyl-beta-neuraminate = a ganglioside GT1b + CMP + H(+). The catalysed reaction is a 3-O-[beta-D-galactosyl-(1-&gt;3)-N-acetyl-alpha-D-galactosaminyl]-L-threonyl-[protein] + CMP-N-acetyl-beta-neuraminate = a 3-O-[N-acetyl-alpha-neuraminyl-(2-&gt;3)-beta-D-galactosyl-(1-&gt;3)-N-acetyl-alpha-D-galactosaminyl]-L-threonyl-[protein] + CMP + H(+). The enzyme catalyses a 3-O-[beta-D-galactosyl-(1-&gt;3)-N-acetyl-alpha-D-galactosaminyl]-L-seryl-[protein] + CMP-N-acetyl-beta-neuraminate = 3-O-[N-acetyl-alpha-neuraminyl-(2-&gt;3)-beta-D-galactosyl-(1-&gt;3)-N-acetyl-alpha-D-galactosaminyl]-L-seryl-[protein] + CMP + H(+). It participates in protein modification; protein glycosylation. The protein operates within glycolipid biosynthesis. In terms of biological role, a beta-galactoside alpha2-&gt;3 sialyltransferase involved in terminal sialylation of glycoproteins and glycolipids. Catalyzes the transfer of sialic acid (N-acetyl-neuraminic acid; Neu5Ac) from the nucleotide sugar donor CMP-Neu5Ac onto acceptor Galbeta-(1-&gt;3)-GalNAc-terminated glycoconjugates through an alpha2-3 linkage. Adds sialic acid to the core 1 O-glycan, Galbeta-(1-&gt;3)-GalNAc-O-Ser/Thr, which is a major structure of mucin-type O-glycans. As part of a homeostatic mechanism that regulates CD8-positive T cell numbers, sialylates core 1 O-glycans of T cell glycoproteins, SPN/CD43 and PTPRC/CD45. Prevents premature apoptosis of thymic CD8-positive T cells prior to peripheral emigration, whereas in the secondary lymphoid organs controls the survival of CD8-positive memory T cells generated following a successful immune response. Transfers sialic acid to asialofetuin, presumably onto Galbeta-(1-&gt;3)-GalNAc-O-Ser. Sialylates GM1a, GA1 and GD1b gangliosides to form GD1a, GM1b and GT1b, respectively. This is CMP-N-acetylneuraminate-beta-galactosamide-alpha-2,3-sialyltransferase 1 (ST3GAL1) from Sus scrofa (Pig).